Here is a 295-residue protein sequence, read N- to C-terminus: Phosphatidylserine decarboxylase proenzyme (295 aa).

Catalysis depends on charge relay system; for autoendoproteolytic cleavage activity residues Asp113, His169, and Ser256. Ser256 acts as the Schiff-base intermediate with substrate; via pyruvic acid; for decarboxylase activity in catalysis. Ser256 carries the pyruvic acid (Ser); by autocatalysis modification.

The protein belongs to the phosphatidylserine decarboxylase family. PSD-B subfamily. Prokaryotic type II sub-subfamily. As to quaternary structure, heterodimer of a large membrane-associated beta subunit and a small pyruvoyl-containing alpha subunit. The cofactor is pyruvate. Post-translationally, is synthesized initially as an inactive proenzyme. Formation of the active enzyme involves a self-maturation process in which the active site pyruvoyl group is generated from an internal serine residue via an autocatalytic post-translational modification. Two non-identical subunits are generated from the proenzyme in this reaction, and the pyruvate is formed at the N-terminus of the alpha chain, which is derived from the carboxyl end of the proenzyme. The autoendoproteolytic cleavage occurs by a canonical serine protease mechanism, in which the side chain hydroxyl group of the serine supplies its oxygen atom to form the C-terminus of the beta chain, while the remainder of the serine residue undergoes an oxidative deamination to produce ammonia and the pyruvoyl prosthetic group on the alpha chain. During this reaction, the Ser that is part of the protease active site of the proenzyme becomes the pyruvoyl prosthetic group, which constitutes an essential element of the active site of the mature decarboxylase.

It is found in the cell membrane. It catalyses the reaction a 1,2-diacyl-sn-glycero-3-phospho-L-serine + H(+) = a 1,2-diacyl-sn-glycero-3-phosphoethanolamine + CO2. Its pathway is phospholipid metabolism; phosphatidylethanolamine biosynthesis; phosphatidylethanolamine from CDP-diacylglycerol: step 2/2. Catalyzes the formation of phosphatidylethanolamine (PtdEtn) from phosphatidylserine (PtdSer). This is Phosphatidylserine decarboxylase proenzyme from Clostridium botulinum (strain Kyoto / Type A2).